A 677-amino-acid chain; its full sequence is UvrABC system protein B (677 aa).

Residues 24–412 (EGVLEGVPAQ…EGIVVEQVIR (389 aa)) form the Helicase ATP-binding domain. ATP is bound at residue 37–44 (GVTGSGKT). The Beta-hairpin motif lies at 90–113 (YYDYYQPEAYLPSSDTYIEKDLAI). One can recognise a Helicase C-terminal domain in the interval 429–591 (QIDDLMEEIQ…ITPQQIKKAR (163 aa)). The UVR domain occupies 635–670 (EKSMERTRKLMQEAAKKLEFIEAAQYRDELLKMEDL).

It belongs to the UvrB family. As to quaternary structure, forms a heterotetramer with UvrA during the search for lesions. Interacts with UvrC in an incision complex.

It localises to the cytoplasm. In terms of biological role, the UvrABC repair system catalyzes the recognition and processing of DNA lesions. A damage recognition complex composed of 2 UvrA and 2 UvrB subunits scans DNA for abnormalities. Upon binding of the UvrA(2)B(2) complex to a putative damaged site, the DNA wraps around one UvrB monomer. DNA wrap is dependent on ATP binding by UvrB and probably causes local melting of the DNA helix, facilitating insertion of UvrB beta-hairpin between the DNA strands. Then UvrB probes one DNA strand for the presence of a lesion. If a lesion is found the UvrA subunits dissociate and the UvrB-DNA preincision complex is formed. This complex is subsequently bound by UvrC and the second UvrB is released. If no lesion is found, the DNA wraps around the other UvrB subunit that will check the other stand for damage. This chain is UvrABC system protein B, found in Bacteroides fragilis (strain YCH46).